Reading from the N-terminus, the 609-residue chain is Proteasome-associated ATPase (609 aa).

The interval 1–24 (MGESERSEAFGIPRDSPLSSGDAA) is disordered. Residues 20–96 (SGDAAELEQL…LREEVDRLGQ (77 aa)) are a coiled coil. ATP is bound at residue 296–301 (GCGKTL). The docks into pockets in the proteasome alpha-ring stretch occupies residues 608–609 (YL).

It belongs to the AAA ATPase family. Homohexamer. Assembles into a hexameric ring structure that caps the 20S proteasome core. Strongly interacts with the prokaryotic ubiquitin-like protein Pup through a hydrophobic interface; the interacting region of ARC lies in its N-terminal coiled-coil domain. There is one Pup binding site per ARC hexamer ring. Upon ATP-binding, the C-terminus of ARC interacts with the alpha-rings of the proteasome core, possibly by binding to the intersubunit pockets.

It participates in protein degradation; proteasomal Pup-dependent pathway. In terms of biological role, ATPase which is responsible for recognizing, binding, unfolding and translocation of pupylated proteins into the bacterial 20S proteasome core particle. May be essential for opening the gate of the 20S proteasome via an interaction with its C-terminus, thereby allowing substrate entry and access to the site of proteolysis. Thus, the C-termini of the proteasomal ATPase may function like a 'key in a lock' to induce gate opening and therefore regulate proteolysis. The sequence is that of Proteasome-associated ATPase from Mycobacterium bovis (strain BCG / Pasteur 1173P2).